A 382-amino-acid polypeptide reads, in one-letter code: Sphingosine kinase 1 (382 aa).

Positions 12 to 159 (PRPCRVLVLL…MNLLSLHTAS (148 aa)) constitute a DAGKc domain. Residues 22–24 (NPQ) and 54–58 (TERKN) contribute to the ATP site. Substrate is bound at residue 79-82 (SGDG). The Proton donor/acceptor role is filled by aspartate 81. Residues glutamate 86 and 111 to 113 (GSG) each bind ATP. Short sequence motifs (nuclear export signal) lie at residues 147-155 (LSPMNLLSL) and 161-169 (LRLYSVLSL). Aspartate 178 contacts substrate. ATP contacts are provided by arginine 185 and arginine 191. Threonine 193 bears the Phosphothreonine mark. Serine 225 carries the phosphoserine modification. 340–342 (DGE) contacts ATP.

In terms of assembly, interacts with ACY1. Binds to calmodulin. Interacts with SPHKAP. Interacts with CIB1, the interaction occurs in a calcium-dependent manner. Interacts with TRAF2. Interacts with EEF1A1; the interaction enhances SPHK1 kinase activity. It depends on Mg(2+) as a cofactor. As to expression, widely expressed. Expressed in brain (at protein level). Detected in neurons.

Its subcellular location is the cytoplasm. The protein resides in the endosome membrane. It is found in the nucleus. The protein localises to the cell membrane. It localises to the synapse. It catalyses the reaction a sphingoid base + ATP = a sphingoid 1-phosphate + ADP + H(+). The catalysed reaction is L-seryl-[protein] + acetyl-CoA = O-acetyl-L-seryl-[protein] + CoA. It carries out the reaction sphinganine + ATP = sphinganine 1-phosphate + ADP + H(+). The enzyme catalyses sphing-4-enine + ATP = sphing-4-enine 1-phosphate + ADP + H(+). It catalyses the reaction 1-O-hexadecyl-2-amino-sn-glycerol + ATP = 1-O-hexadecyl-2-desoxy-2-amino-sn-glycero-3-phosphate + ADP + H(+). With respect to regulation, acetyltransferase activity increases in presence of the kinase substrate, sphingosine. In Purkinje cells, kinase activity on sphingosine increases in presence of VEGFA. In neurons, kinase activity increases during the first 24h in presence of Amyloid-beta protein 42 to decrease after 96h. In terms of biological role, catalyzes the phosphorylation of sphingosine to form sphingosine 1-phosphate (SPP), a lipid mediator with both intra- and extracellular functions. Also acts on D-erythro-sphingosine and to a lesser extent sphinganine, but not other lipids, such as D,L-threo-dihydrosphingosine, N,N-dimethylsphingosine, diacylglycerol, ceramide, or phosphatidylinositol. In contrast to proapoptotic SPHK2, has a negative effect on intracellular ceramide levels, enhances cell growth and inhibits apoptosis. Involved in the regulation of inflammatory response and neuroinflammation. Via the product sphingosine 1-phosphate, stimulates TRAF2 E3 ubiquitin ligase activity, and promotes activation of NF-kappa-B in response to TNF signaling. In response to TNF and in parallel to NF-kappa-B activation, negatively regulates RANTES induction through p38 MAPK signaling pathway. Involved in endocytic membrane trafficking induced by sphingosine, recruited to dilate endosomes, also plays a role on later stages of endosomal maturation and membrane fusion independently of its kinase activity. In Purkinje cells, seems to be also involved in the regulation of autophagosome-lysosome fusion upon VEGFA. Has serine acetyltransferase activity on PTGS2/COX2 in an acetyl-CoA dependent manner. The acetyltransferase activity increases in presence of the kinase substrate, sphingosine. During neuroinflammation, through PTGS2 acetylation, promotes neuronal secretion of specialized preresolving mediators (SPMs), especially 15-R-lipoxin A4, which results in an increase of phagocytic microglia. In Mus musculus (Mouse), this protein is Sphingosine kinase 1.